Reading from the N-terminus, the 270-residue chain is Diaminopimelate epimerase (270 aa).

3 residues coordinate substrate: asparagine 15, glutamine 49, and asparagine 66. Residue cysteine 75 is the Proton donor of the active site. Residues 76 to 77 (GN), asparagine 155, asparagine 187, and 204 to 205 (ER) each bind substrate. The active-site Proton acceptor is cysteine 213. 214–215 (GS) provides a ligand contact to substrate.

Belongs to the diaminopimelate epimerase family. In terms of assembly, homodimer.

The protein localises to the cytoplasm. The catalysed reaction is (2S,6S)-2,6-diaminopimelate = meso-2,6-diaminopimelate. The protein operates within amino-acid biosynthesis; L-lysine biosynthesis via DAP pathway; DL-2,6-diaminopimelate from LL-2,6-diaminopimelate: step 1/1. Its function is as follows. Catalyzes the stereoinversion of LL-2,6-diaminopimelate (L,L-DAP) to meso-diaminopimelate (meso-DAP), a precursor of L-lysine and an essential component of the bacterial peptidoglycan. The polypeptide is Diaminopimelate epimerase (Rickettsia massiliae (strain Mtu5)).